The following is a 101-amino-acid chain: Urease subunit beta (101 aa).

This sequence belongs to the urease beta subunit family. Heterotrimer of UreA (gamma), UreB (beta) and UreC (alpha) subunits. Three heterotrimers associate to form the active enzyme.

The protein localises to the cytoplasm. The enzyme catalyses urea + 2 H2O + H(+) = hydrogencarbonate + 2 NH4(+). It functions in the pathway nitrogen metabolism; urea degradation; CO(2) and NH(3) from urea (urease route): step 1/1. This chain is Urease subunit beta, found in Rhizobium etli (strain ATCC 51251 / DSM 11541 / JCM 21823 / NBRC 15573 / CFN 42).